Here is a 79-residue protein sequence, read N- to C-terminus: ATP synthase subunit 9, mitochondrial (79 aa).

2 consecutive transmembrane segments (helical) span residues 21–41 and 59–79; these read SGLI…ILAF and FALT…ILFI.

It belongs to the ATPase C chain family. F-type ATPases have 2 components, CF(1) - the catalytic core - and CF(0) - the membrane proton channel. CF(1) has five subunits: alpha(3), beta(3), gamma(1), delta(1), epsilon(1). CF(0) has three main subunits: a, b and c.

It localises to the mitochondrion membrane. Mitochondrial membrane ATP synthase (F(1)F(0) ATP synthase or Complex V) produces ATP from ADP in the presence of a proton gradient across the membrane which is generated by electron transport complexes of the respiratory chain. F-type ATPases consist of two structural domains, F(1) - containing the extramembraneous catalytic core and F(0) - containing the membrane proton channel, linked together by a central stalk and a peripheral stalk. During catalysis, ATP synthesis in the catalytic domain of F(1) is coupled via a rotary mechanism of the central stalk subunits to proton translocation. Part of the complex F(0) domain. A homomeric c-ring of probably 10 subunits is part of the complex rotary element. The chain is ATP synthase subunit 9, mitochondrial (ATP9) from Acanthamoeba castellanii (Amoeba).